Here is a 78-residue protein sequence, read N- to C-terminus: Omega-conotoxin PnVIA (78 aa).

A signal peptide spans 1-22; the sequence is MKLTCMMIIAVLFLTAWTFVMA. Positions 23 to 45 are excised as a propeptide; that stretch reads DDPRDEPEARDEMNPAASKLNER. 3 disulfides stabilise this stretch: C47–C65, C54–C69, and C64–C73. Q76 is subject to Glutamine amide.

In terms of tissue distribution, expressed by the venom duct.

Its subcellular location is the secreted. Omega-conotoxins act at presynaptic membranes, they bind and block voltage-gated calcium channels (Cav). Acts on high voltage-activated (HVA) calcium currents in molluscan neurons. This Conus pennaceus (Feathered cone) protein is Omega-conotoxin PnVIA.